A 286-amino-acid chain; its full sequence is Protein PXR1 (286 aa).

The segment at 1–20 (MGLAGTKVKQRFGLDPRNTS) is disordered. Positions 25–71 (KSRFGHRYLESMGWAPGKGLGLVEHATTTHVKVSVKDDTVGLGAKLA) constitute a G-patch domain. The tract at residues 148–255 (EDESEVNFKS…PRKHDQISNV (108 aa)) is disordered. Residues 168-198 (PSRDSTSHAKRMRGDESKKSTRDQSKQERKE) show a composition bias toward basic and acidic residues. Positions 199-230 (KKIKTEKKEKKEKKEKKEKKEKKEKKEKKEKK) are enriched in basic residues.

Belongs to the PINX1 family.

The protein resides in the nucleus. Its subcellular location is the nucleolus. Functionally, involved in rRNA-processing at A0, A1 and A2 sites and negatively regulates telomerase. The sequence is that of Protein PXR1 (PXR1) from Meyerozyma guilliermondii (strain ATCC 6260 / CBS 566 / DSM 6381 / JCM 1539 / NBRC 10279 / NRRL Y-324) (Yeast).